The following is a 72-amino-acid chain: UPF0346 protein EF_1680 (72 aa).

The protein belongs to the UPF0346 family.

The polypeptide is UPF0346 protein EF_1680 (Enterococcus faecalis (strain ATCC 700802 / V583)).